A 188-amino-acid chain; its full sequence is Peroxiredoxin y4vD (188 aa).

The 151-residue stretch at 2-152 (PVKKRVPFVA…VEQWFEEEGF (151 aa)) folds into the Thioredoxin domain. Cys-56 serves as the catalytic Cysteine sulfenic acid (-SOH) intermediate (for peroxiredoxin activity).

This sequence belongs to the peroxiredoxin family. Prx5 subfamily. Monomer.

The enzyme catalyses a hydroperoxide + 2 glutathione = an alcohol + glutathione disulfide + H2O. In terms of biological role, thiol-specific peroxidase that catalyzes the reduction of hydrogen peroxide and organic hydroperoxides to water and alcohols, respectively. Plays a role in cell protection against oxidative stress by detoxifying peroxides. The protein is Peroxiredoxin y4vD of Sinorhizobium fredii (strain NBRC 101917 / NGR234).